The primary structure comprises 328 residues: Tryptophan--tRNA ligase (328 aa).

ATP-binding positions include glutamine 11 to threonine 13 and glycine 19 to asparagine 20. A 'HIGH' region motif is present at residues proline 12–asparagine 20. Aspartate 135 contributes to the L-tryptophan binding site. ATP is bound by residues glycine 147–aspartate 149, isoleucine 186, and lysine 195–serine 199. Positions lysine 195–serine 199 match the 'KMSKS' region motif.

This sequence belongs to the class-I aminoacyl-tRNA synthetase family. Homodimer.

It localises to the cytoplasm. It catalyses the reaction tRNA(Trp) + L-tryptophan + ATP = L-tryptophyl-tRNA(Trp) + AMP + diphosphate + H(+). In terms of biological role, catalyzes the attachment of tryptophan to tRNA(Trp). This is Tryptophan--tRNA ligase from Wolinella succinogenes (strain ATCC 29543 / DSM 1740 / CCUG 13145 / JCM 31913 / LMG 7466 / NCTC 11488 / FDC 602W) (Vibrio succinogenes).